The sequence spans 196 residues: Large ribosomal subunit protein uL18 (196 aa).

The protein belongs to the universal ribosomal protein uL18 family. Part of the 50S ribosomal subunit. Contacts the 5S and 23S rRNAs.

This is one of the proteins that bind and probably mediate the attachment of the 5S RNA into the large ribosomal subunit, where it forms part of the central protuberance. This Saccharolobus islandicus (strain Y.N.15.51 / Yellowstone #2) (Sulfolobus islandicus) protein is Large ribosomal subunit protein uL18.